Consider the following 240-residue polypeptide: MORN repeat-containing protein 3 (240 aa).

The interval 6 to 35 (CPKKSESLWKGWDRKAQRNGLRSQVYAVNG) is interaction with MDM2. MORN repeat units follow at residues 38-60 (YVGE…KKGA), 62-84 (YEGD…DQQT), 91-113 (YSGW…PKEY), 114-136 (YEGD…NGDI), 137-159 (YEGQ…NGNR), 160-182 (YEGC…DHGQ), and 184-205 (FEGF…GRDE). Positions 76-100 (TLSLPDQQTGKCRRVYSGWWKGDKK) are interaction with SIRT1. Residues 206 to 240 (APEPTQFPIPEVKILDPDGVLAEALAMFRKTEEGD) are interaction with TP53.

In terms of assembly, interacts with MEIG1. Interacts with TP53, MDM2 and SIRT1; the interactions mediate post-transcriptional modifications of TP53 by MDM2 and SIRT1.

The protein localises to the cytoplasmic vesicle. It is found in the secretory vesicle. The protein resides in the acrosome. Functionally, assembles a suppression complex (suppresome) by tethering SIRT1 and MDM2 to regulate composite modifications of p53/TP53. Confers both deacetylation-mediated functional inactivation, by SIRT1, and ubiquitination-dependent degradation, by MDM2, of p53/TP53, promoting a proliferative and cell survival behaviors. May play a role in the regulation of spermatogenesis. This Homo sapiens (Human) protein is MORN repeat-containing protein 3.